We begin with the raw amino-acid sequence, 380 residues long: Polygalacturonase 2 (380 aa).

The N-terminal stretch at 1–20 is a signal peptide; sequence MIAGSKLLMLGLFGALAVHA. Residues 21–38 constitute a propeptide that is removed on maturation; it reads LPEPAKAQVTAAPKLEER. Cys-42 and Cys-60 form a disulfide bridge. 2 PbH1 repeats span residues 173–204 and 205–226; these read ATDLTLSGITVDNRDGDTDEGGHNTDAFDVGS and STGITITGATVYNQDDCLAVNS. The active-site Proton donor is Asp-219. An intrachain disulfide couples Cys-221 to Cys-237. The active site involves His-241. PbH1 repeat units follow at residues 256 to 277, 285 to 307, and 319 to 364; these read VANVIIENSQIQDSTNGVRIKT, VKNVTYKDITLSGITKYGIVIEQ, and TDGV…SVSG. The N-linked (GlcNAc...) asparagine glycan is linked to Asn-287. 2 disulfide bridges follow: Cys-347–Cys-352 and Cys-371–Cys-380.

It belongs to the glycosyl hydrolase 28 family.

The protein localises to the secreted. It carries out the reaction (1,4-alpha-D-galacturonosyl)n+m + H2O = (1,4-alpha-D-galacturonosyl)n + (1,4-alpha-D-galacturonosyl)m.. The chain is Polygalacturonase 2 (PG2) from Penicillium olsonii.